The sequence spans 374 residues: DNA replication and repair protein RecF (374 aa).

Gly34 to Thr41 is a binding site for ATP.

The protein belongs to the RecF family.

It is found in the cytoplasm. Functionally, the RecF protein is involved in DNA metabolism; it is required for DNA replication and normal SOS inducibility. RecF binds preferentially to single-stranded, linear DNA. It also seems to bind ATP. The chain is DNA replication and repair protein RecF from Rhizobium johnstonii (strain DSM 114642 / LMG 32736 / 3841) (Rhizobium leguminosarum bv. viciae).